A 172-amino-acid chain; its full sequence is Large ribosomal subunit protein uL10 (172 aa).

This sequence belongs to the universal ribosomal protein uL10 family. Part of the ribosomal stalk of the 50S ribosomal subunit. The N-terminus interacts with L11 and the large rRNA to form the base of the stalk. The C-terminus forms an elongated spine to which L12 dimers bind in a sequential fashion forming a multimeric L10(L12)X complex.

In terms of biological role, forms part of the ribosomal stalk, playing a central role in the interaction of the ribosome with GTP-bound translation factors. This Nitrobacter winogradskyi (strain ATCC 25391 / DSM 10237 / CIP 104748 / NCIMB 11846 / Nb-255) protein is Large ribosomal subunit protein uL10.